The primary structure comprises 136 residues: 1,4-dihydroxy-2-naphthoyl-CoA hydrolase (136 aa).

Catalysis depends on Glu63, which acts as the Nucleophile or proton acceptor. Residues Gly82, 89 to 92 (HVRS), and 106 to 111 (HLGSRH) each bind substrate.

The protein belongs to the thioesterase PaaI family. Homotetramer. Dimer of dimers.

The catalysed reaction is 1,4-dihydroxy-2-naphthoyl-CoA + H2O = 1,4-dihydroxy-2-naphthoate + CoA + H(+). Its pathway is quinol/quinone metabolism; 1,4-dihydroxy-2-naphthoate biosynthesis; 1,4-dihydroxy-2-naphthoate from chorismate: step 7/7. The protein operates within quinol/quinone metabolism; menaquinone biosynthesis. Functionally, catalyzes the hydrolysis of 1,4-dihydroxy-2-naphthoyl-CoA (DHNA-CoA) to 1,4-dihydroxy-2-naphthoate (DHNA). Also shows significant activity toward a wide range of acyl-CoA thioesters, and minimal activity toward benzoyl-holoEntB. This Escherichia coli (strain K12) protein is 1,4-dihydroxy-2-naphthoyl-CoA hydrolase.